The sequence spans 687 residues: Glycine--tRNA ligase beta subunit (687 aa).

This sequence belongs to the class-II aminoacyl-tRNA synthetase family. As to quaternary structure, tetramer of two alpha and two beta subunits.

It localises to the cytoplasm. The catalysed reaction is tRNA(Gly) + glycine + ATP = glycyl-tRNA(Gly) + AMP + diphosphate. This chain is Glycine--tRNA ligase beta subunit, found in Lactobacillus acidophilus (strain ATCC 700396 / NCK56 / N2 / NCFM).